Here is an 824-residue protein sequence, read N- to C-terminus: MRGLGLWLLGAMMLPAIAPSRPWALMEQYEVVLPWRLPGPRVRRALPSHLGLHPERVSYVLGATGHNFTLHLRKNRDLLGSGYTETYTAANGSEVTEQPRGQDHCFYQGHVEGYPDSAASLSTCAGLRGFFQVGSDLHLIEPLDEGGEGGRHAVYQAEHLLQTAGTCGVSDDSLGSLLGPRTAAVFRPRPGDSLPSRETRYVELYVVVDNAEFQMLGSEAAVRHRVLEVVNHVDKLYQKLNFRVVLVGLEIWNSQDRFHVSPDPSVTLENLLTWQARQRTRRHLHDNVQLITGVDFTGTTVGFARVSAMCSHSSGAVNQDHSKNPVGVACTMAHEMGHNLGMDHDENVQGCRCQERFEAGRCIMAGSIGSSFPRMFSDCSQAYLESFLERPQSVCLANAPDLSHLVGGPVCGNLFVERGEQCDCGPPEDCRNRCCNSTTCQLAEGAQCAHGTCCQECKVKPAGELCRPKKDMCDLEEFCDGRHPECPEDAFQENGTPCSGGYCYNGACPTLAQQCQAFWGPGGQAAEESCFSYDILPGCKASRYRADMCGVLQCKGGQQPLGRAICIVDVCHALTTEDGTAYEPVPEGTRCGPEKVCWKGRCQDLHVYRSSNCSAQCHNHGVCNHKQECHCHAGWAPPHCAKLLTEVHAASGSLPVFVVVVLVLLAVVLVTLAGIIVYRKARSRILSRNVAPKTTMGRSNPLFHQAASRVPAKGGAPAPSRGPQELVPTTHPGQPARHPASSVALKRPPPAPPVTVSSPPFPVPVYTRQAPKQVIKPTFAPPVPPVKPGAGAANPGPAEGAVGPKVALKPPIQRKQGAGAPTAP.

The first 16 residues, 1–16 (MRGLGLWLLGAMMLPA), serve as a signal peptide directing secretion. Topologically, residues 17–655 (IAPSRPWALM…EVHAASGSLP (639 aa)) are extracellular. 2 N-linked (GlcNAc...) asparagine glycosylation sites follow: Asn67 and Asn91. In terms of domain architecture, Peptidase M12B spans 200-400 (RYVELYVVVD…PQSVCLANAP (201 aa)). 12 cysteine pairs are disulfide-bonded: Cys310/Cys395, Cys351/Cys379, Cys353/Cys362, Cys435/Cys457, Cys448/Cys454, Cys466/Cys486, Cys473/Cys503, Cys498/Cys508, Cys566/Cys613, Cys613/Cys623, Cys617/Cys629, and Cys631/Cys640. His334 lines the Zn(2+) pocket. Glu335 is a catalytic residue. His338 and His344 together coordinate Zn(2+). A Disintegrin domain is found at 408–494 (GPVCGNLFVE…ECPEDAFQEN (87 aa)). An N-linked (GlcNAc...) asparagine glycan is attached at Asn436. The 33-residue stretch at 609–641 (RSSNCSAQCHNHGVCNHKQECHCHAGWAPPHCA) folds into the EGF-like domain. Asn612 carries N-linked (GlcNAc...) asparagine glycosylation. The chain crosses the membrane as a helical span at residues 656–676 (VFVVVVLVLLAVVLVTLAGII). The Cytoplasmic portion of the chain corresponds to 677–824 (VYRKARSRIL…KQGAGAPTAP (148 aa)). Disordered regions lie at residues 710-756 (VPAK…PVTV) and 776-824 (KPTF…PTAP). The segment covering 747–756 (RPPPAPPVTV) has biased composition (pro residues). Over residues 788–804 (PGAGAANPGPAEGAVGP) the composition is skewed to low complexity.

As to quaternary structure, interacts with FST3. Zn(2+) serves as cofactor. As to expression, expressed on neutrophils and monocytes.

Its subcellular location is the membrane. Functionally, possible involvement in extravasation of leukocytes. The protein is Disintegrin and metalloproteinase domain-containing protein 8 (ADAM8) of Homo sapiens (Human).